A 148-amino-acid chain; its full sequence is Ribonuclease H (148 aa).

Residues 1–143 enclose the RNase H type-1 domain; it reads MNQVVIYTDG…ADMLANKGVE (143 aa). Mg(2+) is bound by residues Asp9, Glu47, Asp69, and Asp135.

The protein belongs to the RNase H family. In terms of assembly, monomer. It depends on Mg(2+) as a cofactor.

It localises to the cytoplasm. It catalyses the reaction Endonucleolytic cleavage to 5'-phosphomonoester.. Functionally, endonuclease that specifically degrades the RNA of RNA-DNA hybrids. This chain is Ribonuclease H, found in Acidovorax sp. (strain JS42).